The chain runs to 301 residues: Acetylglutamate kinase (301 aa).

Residues 68–69 (GG), R90, and N195 contribute to the substrate site.

This sequence belongs to the acetylglutamate kinase family. ArgB subfamily.

It localises to the cytoplasm. It catalyses the reaction N-acetyl-L-glutamate + ATP = N-acetyl-L-glutamyl 5-phosphate + ADP. It functions in the pathway amino-acid biosynthesis; L-arginine biosynthesis; N(2)-acetyl-L-ornithine from L-glutamate: step 2/4. In terms of biological role, catalyzes the ATP-dependent phosphorylation of N-acetyl-L-glutamate. The polypeptide is Acetylglutamate kinase (Pseudomonas putida (strain W619)).